The chain runs to 314 residues: Tetraacyldisaccharide 4'-kinase (314 aa).

ATP is bound at residue 61–68 (IVGGSGKT).

It belongs to the LpxK family.

It carries out the reaction a lipid A disaccharide + ATP = a lipid IVA + ADP + H(+). It participates in glycolipid biosynthesis; lipid IV(A) biosynthesis; lipid IV(A) from (3R)-3-hydroxytetradecanoyl-[acyl-carrier-protein] and UDP-N-acetyl-alpha-D-glucosamine: step 6/6. Functionally, transfers the gamma-phosphate of ATP to the 4'-position of a tetraacyldisaccharide 1-phosphate intermediate (termed DS-1-P) to form tetraacyldisaccharide 1,4'-bis-phosphate (lipid IVA). The chain is Tetraacyldisaccharide 4'-kinase from Aliarcobacter butzleri (strain RM4018) (Arcobacter butzleri).